The chain runs to 526 residues: Zinc finger protein 69 homolog (526 aa).

The SCAN box domain occupies Met1–Phe39. The KRAB domain occupies Leu76–Ser147. 9 consecutive C2H2-type zinc fingers follow at residues Tyr271–His293, Phe299–His321, Phe327–His349, Tyr355–His377, Phe383–His405, Tyr411–His433, Tyr439–His461, Tyr467–His489, and Tyr495–His517.

It belongs to the krueppel C2H2-type zinc-finger protein family. As to expression, expressed in visceral and subcutaneous adipose tissue.

It localises to the nucleus. Putative transcription factor that appears to regulate lipid metabolism. This is Zinc finger protein 69 homolog (ZFP69) from Homo sapiens (Human).